We begin with the raw amino-acid sequence, 995 residues long: Meckelin (995 aa).

The N-terminal stretch at 1-36 (MATRGGAGVAMAVWSLLSARAVTAFLLLFLPRFLQA) is a signal peptide. The segment at 37-280 (QTFSFPFQQP…FQFIFENTAG (244 aa)) is cysteine-rich. Residues 37–519 (QTFSFPFQQP…SVTYEMDHGE (483 aa)) lie on the Extracellular side of the membrane. 11 cysteine pairs are disulfide-bonded: Cys-49/Cys-62, Cys-65/Cys-78, Cys-80/Cys-97, Cys-100/Cys-114, Cys-117/Cys-127, Cys-129/Cys-150, Cys-153/Cys-170, Cys-173/Cys-184, Cys-186/Cys-197, Cys-237/Cys-246, and Cys-253/Cys-268. An N-linked (GlcNAc...) asparagine glycan is attached at Asn-141. Asn-179 is a glycosylation site (N-linked (GlcNAc...) asparagine). Residue Asn-242 is glycosylated (N-linked (GlcNAc...) asparagine). A glycan (N-linked (GlcNAc...) asparagine) is linked at Asn-318. An intrachain disulfide couples Cys-357 to Cys-378. Residues 520–548 (AHVQTDIALGVLGGLAVLASLLKTAGWKR) form a helical membrane-spanning segment. Residues 549–558 (RIGSPMIDLQ) are Cytoplasmic-facing. Residues 559–590 (TVVKFLVYYAGDLANVFFIITVGTGLYWLIFF) traverse the membrane as a helical segment. The Extracellular portion of the chain corresponds to 591–603 (KAQKSVSVLLPMP). Residues 604–631 (IQEERFVTYVGCAFALKALQFLHKLISQ) traverse the membrane as a helical segment. Over 632–670 (ITIDVFFIDWERPKGKVLKAVEGEGGVRSATVPVSIWRT) the chain is Cytoplasmic. An intramembrane region (helical) is located at residues 671 to 679 (YFVANEWNE). The chain crosses the membrane as a discontinuously helical span at residues 671–701 (YFVANEWNEIQTVRKINSLFQVLTVLFFLEV). The stretch at 680–688 (IQTVRKINS) is an intramembrane region. Positions 689–701 (LFQVLTVLFFLEV) form an intramembrane region, helical. Topologically, residues 702-731 (VGFKNLALMDSSSSLSRNPPSYIAPYSCIL) are extracellular. Positions 732 to 757 (RYAVSAALWLAIGIIQVVFFAVFYER) form an intramembrane region, helical. A discontinuously helical transmembrane segment spans residues 732–771 (RYAVSAALWLAIGIIQVVFFAVFYERFIEDKIRQFVDLCS). An intramembrane segment occupies 758–762 (FIEDK). Residues 763-771 (IRQFVDLCS) constitute an intramembrane region (helical). At 772–926 (MSNISVFLLS…SIFYNDEGYS (155 aa)) the chain is on the cytoplasmic side. Residues 828–917 (GQTFEIAISN…MEFMEPMEKS (90 aa)) are a coiled coil. Positions 927–929 (FSS) form an intramembrane region, helical. Residues 927 to 952 (FSSVLYYGNEATLLIFDLLFFCVVDL) form a discontinuously helical membrane-spanning segment. An intramembrane segment occupies 930 to 936 (VLYYGNE). Residues 937 to 952 (ATLLIFDLLFFCVVDL) constitute an intramembrane region (helical). Residues 953-957 (ACQNF) are Extracellular-facing. Residues 958-985 (ILASFLTYLQQEIFRYIRNTVGQKNLAS) traverse the membrane as a helical segment. The Cytoplasmic segment spans residues 986-995 (KTLVDQRFLI).

In terms of assembly, homodimer. Part of the tectonic-like complex (also named B9 complex). Interacts with DNAJB9, DNAJC10 and mutated SFTPC. Interacts with SYNE2 during the early establishment of cell polarity. Interacts (via C-terminus) with FLNA. Interacts with TMEM218. Interacts with WNT5A. Interacts with ROR2. Widely expressed in adult and fetal tissues. Expressed at higher level in spinal cord.

The protein localises to the cell membrane. Its subcellular location is the endoplasmic reticulum membrane. It localises to the cell projection. The protein resides in the cilium. It is found in the cytoplasm. The protein localises to the cytoskeleton. Its subcellular location is the cilium basal body. Required for ciliary structure and function. Part of the tectonic-like complex which is required for tissue-specific ciliogenesis and may regulate ciliary membrane composition. Involved in centrosome migration to the apical cell surface during early ciliogenesis. Involved in the regulation of cilia length and appropriate number through the control of centrosome duplication. Is a key regulator of stereociliary bundle orientation. Required for epithelial cell branching morphology. Essential for endoplasmic reticulum-associated degradation (ERAD) of surfactant protein C (SFTPC). Involved in the negative regulation of canonical Wnt signaling, and activation of the non-canonical cascade stimulated by WNT5A. In non-canonical Wnt signaling, it may act as ROR2 coreceptor. This is Meckelin (TMEM67) from Homo sapiens (Human).